The following is a 198-amino-acid chain: Rac-like GTP-binding protein ARAC3 (198 aa).

Residues 13–21 (GDGAVGKTC), 31–38 (FPTDYVPT), 60–64 (DTAGQ), and 118–121 (TKLD) each bind GTP. Residues 35-43 (YVPTVFDNF) carry the Effector region motif. C158 is lipidated: S-palmitoyl cysteine. C195 is subject to Cysteine methyl ester. C195 carries the S-geranylgeranyl cysteine lipid modification. The propeptide at 196-198 (SIL) is removed in mature form.

This sequence belongs to the small GTPase superfamily. Rho family. As to quaternary structure, interacts with Rho GDP-dissociation inhibitor 1 and ICR1. Binds to SPK1 when in the inactive GDP-bound form. As to expression, ubiquitous. Preferentially expressed at the tip of root hairs.

The protein resides in the cytoplasm. It is found in the cell membrane. Its function is as follows. Inactive GDP-bound Rho GTPases reside in the cytosol, are found in a complex with Rho GDP-dissociation inhibitors (Rho GDIs), and are released from the GDI protein in order to translocate to membranes upon activation. Involved in cell polarity control during the actin-dependent tip growth of root hairs, thus regulating root hair length and root hair initiation. Contributes, in a SPK1-dependent manner, to the prevention of cortical microtubules organization into parallel arrays oriented perpendicular to the axis of cell elongation to limit anisotropic cell growth during petal development. SPK1-dependent activation is required for auxin-mediated inhibition of PIN2 internalization during gravitropic responses. The protein is Rac-like GTP-binding protein ARAC3 of Arabidopsis thaliana (Mouse-ear cress).